We begin with the raw amino-acid sequence, 1058 residues long: Outer capsid protein VP4 (1058 aa).

The protein belongs to the orthoreovirus lambda-2 protein family.

The protein resides in the virion. It carries out the reaction a 5'-end diphospho-ribonucleoside in mRNA + GTP + H(+) = a 5'-end (5'-triphosphoguanosine)-ribonucleoside in mRNA + diphosphate. It catalyses the reaction a 5'-end (5'-triphosphoguanosine)-ribonucleoside in mRNA + S-adenosyl-L-methionine = a 5'-end (N(7)-methyl 5'-triphosphoguanosine)-ribonucleoside in mRNA + S-adenosyl-L-homocysteine. In terms of biological role, outer capsid protein involved in mRNA capping. Catalyzes the last 3 enzymatic activities for formation of the 5' cap structure on the viral plus-strand transcripts, namely the RNA guanylyltransferase, RNA-7N- and RNA-2'O-methyltransferase activities. This is Outer capsid protein VP4 (S4) from Lymantria dispar cypovirus 1 (isolate Rao) (LdCPV-1).